The chain runs to 665 residues: Transketolase (665 aa).

Position 26 (histidine 26) interacts with substrate. Residues histidine 66 and 114–116 each bind thiamine diphosphate; that span reads GPL. Aspartate 155 contributes to the Mg(2+) binding site. 2 residues coordinate thiamine diphosphate: glycine 156 and asparagine 185. Asparagine 185 and isoleucine 187 together coordinate Mg(2+). Histidine 261, arginine 358, and serine 385 together coordinate substrate. Histidine 261 lines the thiamine diphosphate pocket. Glutamate 411 acts as the Proton donor in catalysis. Phenylalanine 437 is a thiamine diphosphate binding site. The substrate site is built by histidine 461, aspartate 469, and arginine 520.

The protein belongs to the transketolase family. In terms of assembly, homodimer. It depends on Mg(2+) as a cofactor. Ca(2+) serves as cofactor. Requires Mn(2+) as cofactor. The cofactor is Co(2+). Thiamine diphosphate is required as a cofactor.

It catalyses the reaction D-sedoheptulose 7-phosphate + D-glyceraldehyde 3-phosphate = aldehydo-D-ribose 5-phosphate + D-xylulose 5-phosphate. In terms of biological role, catalyzes the transfer of a two-carbon ketol group from a ketose donor to an aldose acceptor, via a covalent intermediate with the cofactor thiamine pyrophosphate. This chain is Transketolase (tkt), found in Buchnera aphidicola subsp. Schizaphis graminum (strain Sg).